A 343-amino-acid chain; its full sequence is Protein RecA (343 aa).

An ATP-binding site is contributed by 68 to 75 (GPESGGKT).

Belongs to the RecA family.

Its subcellular location is the cytoplasm. Its function is as follows. Can catalyze the hydrolysis of ATP in the presence of single-stranded DNA, the ATP-dependent uptake of single-stranded DNA by duplex DNA, and the ATP-dependent hybridization of homologous single-stranded DNAs. It interacts with LexA causing its activation and leading to its autocatalytic cleavage. This Syntrophus aciditrophicus (strain SB) protein is Protein RecA.